The chain runs to 471 residues: RGCGTAGCRRTWRGRPTAVGRVALHWAAGAGHEQAVRLLLEHEAAVDEEDAFGMNALLLSAWFGHLRILQILVNSGAKIHCKSKDGLTLLHCAAQKGHVPVLAFIMEDLEDVALDHVDKLGRTAFHRAAEHGQLDALDFLVGSGCDHSVKDKEGNTALHLAAGRGHMAVLQRLVDIGLDLEEQNAEGLTALHAAAGGTHPHCVRLLLRAGSTVNALTQKNLSCLHYAALSGSEDVSRVLIHAGGCTNVADHGASPLHLAVMHNFPALVQLLINSDSDLNAMDNRQQTPLHLAAEHAWQDIAEMLLIAGVDLNLRDKQGKTALAVAARSNHVSLVDMIIKADRFYKWEKDHLSCRDLSDPSGKSLSFKQDHRQETQQLRSVLWRLASRHLQPREWKKLAYSWDFTEAHVYAIEQQWTGTRSYQEHGHRMLLIWLHGVSTAGENPSKALFEGLVTIGRRDLAELAVASVGAYI.

ANK repeat units follow at residues 19–48 (VGRVALHWAAGAGHEQAVRLLLEHEAAVDE), 52–81 (FGMNALLLSAWFGHLRILQILVNSGAKIHC), 85–114 (DGLTLLHCAAQKGHVPVLAFIMEDLEDVAL), 120–149 (LGRTAFHRAAEHGQLDALDFLVGSGCDHSV), 153–182 (EGNTALHLAAGRGHMAVLQRLVDIGLDLEE), 186–215 (EGLTALHAAAGGTHPHCVRLLLRAGSTVNA), 219–248 (KNLSCLHYAALSGSEDVSRVLIHAGGCTNV), 251–280 (HGASPLHLAVMHNFPALVQLLINSDSDLNA), 284–313 (RQQTPLHLAAEHAWQDIAEMLLIAGVDLNL), and 317–346 (QGKTALAVAARSNHVSLVDMIIKADRFYKW). The 89-residue stretch at 379–467 (SVLWRLASRH…DLAELAVASV (89 aa)) folds into the Death domain.

The chain is Ankyrin repeat and death domain-containing protein 1A (ANKDD1A) from Macaca fascicularis (Crab-eating macaque).